Consider the following 348-residue polypeptide: D-alanine--D-alanine ligase (348 aa).

In terms of domain architecture, ATP-grasp spans 132-334; the sequence is KRILEVAGVP…YSDLIKELVV (203 aa). An ATP-binding site is contributed by 162–217; that stretch reads LEKLTFPVFVKPANMGSSVGISKAENESELRSAIDLALKYDSRILIEQGVVAREIE. Mg(2+) is bound by residues aspartate 288, glutamate 301, and asparagine 303.

It belongs to the D-alanine--D-alanine ligase family. Mg(2+) serves as cofactor. Mn(2+) is required as a cofactor.

The protein resides in the cytoplasm. It carries out the reaction 2 D-alanine + ATP = D-alanyl-D-alanine + ADP + phosphate + H(+). It participates in cell wall biogenesis; peptidoglycan biosynthesis. Cell wall formation. This Streptococcus thermophilus (strain ATCC BAA-491 / LMD-9) protein is D-alanine--D-alanine ligase.